The following is a 202-amino-acid chain: Transmembrane 4 L6 family member 1 (202 aa).

The Cytoplasmic segment spans residues 1-9 (MCYGKCARC). The helical transmembrane segment at 10–30 (IGHSLVGLALLCIAANILLYF) threads the bilayer. The Extracellular portion of the chain corresponds to 31-49 (PNGETKYASENHLSRFVWF). The helical transmembrane segment at 50–70 (FSGIVGGGLLMLLPAFVFIGL) threads the bilayer. Residues 71 to 93 (EQDDCCGCCGHENCGKRCAMLSS) are Cytoplasmic-facing. The helical transmembrane segment at 94 to 114 (VLAALIGIAGSGYCVIVAALG) threads the bilayer. At 115–161 (LAEGPLCLDSLGQWNYTFASTEGQYLLDTSTWSECTEPKHIVEWNVS) the chain is on the extracellular side. 2 N-linked (GlcNAc...) asparagine glycosylation sites follow: Asn-129 and Asn-159. A helical membrane pass occupies residues 162-182 (LFSILLALGGIEFILCLIQVI). The Cytoplasmic portion of the chain corresponds to 183-202 (NGVLGGICGFCCSHQQQYDC).

Belongs to the L6 tetraspanin family. Present in high molecular weight complexes in tumor cells. Interacts with SDCBP2. In terms of tissue distribution, highly expressed in lung, breast, colon and ovarian carcinomas. It is also present on some normal cells, endothelial cells in particular.

It localises to the membrane. The sequence is that of Transmembrane 4 L6 family member 1 (TM4SF1) from Homo sapiens (Human).